A 277-amino-acid polypeptide reads, in one-letter code: Diaminopimelate epimerase (277 aa).

Residues N13, Q46, and N66 each coordinate substrate. C75 (proton donor) is an active-site residue. Residues 76-77 (GN), N159, N192, and 210-211 (ER) each bind substrate. C219 functions as the Proton acceptor in the catalytic mechanism. 220–221 (GT) is a binding site for substrate.

Belongs to the diaminopimelate epimerase family. Homodimer.

It localises to the cytoplasm. It catalyses the reaction (2S,6S)-2,6-diaminopimelate = meso-2,6-diaminopimelate. Its pathway is amino-acid biosynthesis; L-lysine biosynthesis via DAP pathway; DL-2,6-diaminopimelate from LL-2,6-diaminopimelate: step 1/1. Catalyzes the stereoinversion of LL-2,6-diaminopimelate (L,L-DAP) to meso-diaminopimelate (meso-DAP), a precursor of L-lysine and an essential component of the bacterial peptidoglycan. The polypeptide is Diaminopimelate epimerase (Aromatoleum aromaticum (strain DSM 19018 / LMG 30748 / EbN1) (Azoarcus sp. (strain EbN1))).